We begin with the raw amino-acid sequence, 264 residues long: ATP synthase subunit a (264 aa).

6 helical membrane passes run 29–49 (TWHI…LWIF), 90–110 (IAPL…MDMI), 134–154 (DVNI…FYSI), 177–197 (IPVN…SLAL), 208–228 (LIFI…TLGV), and 235–255 (LIFH…LTIV).

Belongs to the ATPase A chain family. In terms of assembly, F-type ATPases have 2 components, CF(1) - the catalytic core - and CF(0) - the membrane proton channel. CF(1) has five subunits: alpha(3), beta(3), gamma(1), delta(1), epsilon(1). CF(0) has three main subunits: a(1), b(2) and c(9-12). The alpha and beta chains form an alternating ring which encloses part of the gamma chain. CF(1) is attached to CF(0) by a central stalk formed by the gamma and epsilon chains, while a peripheral stalk is formed by the delta and b chains.

It localises to the cell inner membrane. Its function is as follows. Key component of the proton channel; it plays a direct role in the translocation of protons across the membrane. This Shewanella baltica (strain OS223) protein is ATP synthase subunit a.